Reading from the N-terminus, the 80-residue chain is Cell division protein ZapB (80 aa).

A coiled-coil region spans residues 3-80 (FEVFEKLEAK…ALLGKMNEVN (78 aa)).

This sequence belongs to the ZapB family. As to quaternary structure, homodimer. The ends of the coiled-coil dimer bind to each other, forming polymers. Interacts with FtsZ.

The protein resides in the cytoplasm. Non-essential, abundant cell division factor that is required for proper Z-ring formation. It is recruited early to the divisome by direct interaction with FtsZ, stimulating Z-ring assembly and thereby promoting cell division earlier in the cell cycle. Its recruitment to the Z-ring requires functional FtsA or ZipA. This chain is Cell division protein ZapB, found in Edwardsiella ictaluri (strain 93-146).